We begin with the raw amino-acid sequence, 2351 residues long: MFFKMKNEIDNDPESEKCIKDSTIMRREPQNILSPLMLPNLEIPFSVKDIISRIERAQLHRAREDIDMQLSEIMNNVHRIMTRYTLVFNSSSERNVSLTEHKKKQRTNFLEKMATYAKTIEIREKTLANILAWLEEWNDVLSEMTLMDVDEHHHWIAQMELLPDTLKAIENNVKILSRFSTSFLDEKKKQKKKILSRGTLWKSWKERVIKRPSTARALRPDQMISDQLATNTKVSEIQGMLQELIGTTMFSTLENNAIKYISSTIVNLSTALSMLNDELKCVNFQSSTVYAHETSEAEKELSLKIIRDLSNENEMLQQKLQDAEEKCEQLIRSKIVIEQLYAKLSTSSTLKVLPGPSPQSSRAIIKVGDTEDNMDNILDKELENIVDEVQRKETKDSGIKWDSTISYTAQAERTPDLTELRQQPVASEDISEDSTKDNVSLKKGDFYQEDETDEYQSWKRSHKKATYVYETSGPNLSDNKSGQKVSEAKPSQYYELQVLKKKRKEMKSFSEDKSKSPTEAKRKHLSLTETKSQGGKSGTSMMMLEQFRKVKRESPFDKRPTAAEIKVEPTTESLDKEGKGEIRSLVEPLSMIQFDDTAEPQKGKIKGKKHHISSGTITSKEEKTEEKEELTKQVKSHQLVKSLSRVAKETSESTRVLESPDGKSEQSNLEEFQEAIMAFLKQKIDNIGKAFDKKTVPKEEELLKRAEAEKLGIIKAKMEEYFQKVAETVTKILRKYKDTKKEEQVGEKPIKQKKVVSFMPGLHFQKSPISAKSESSTLLSYESTDPVINNLIQMILAEIESERDIPTVSTVQKDHKEKEKQRQEQYLQEGQEQMSGMSLKQQLLGERNLLKEHYEKISENWEEKKAWLQMKEGKQEQQSQKQWQEEEMWKEEQKQATPKQAEQEEKQKQRGQEEEELPKSSLQRLEEGTQKMKTQGLLLEKENGQMRQIQKEAKHLGPHRRREKGKEKQKPERGLEDLERQIKTKDQMQMKETQPKELEKMVIQTPMTLSPRWKSVLKDVQRSYEGKEFQRNLKTLENLPDEKEPISITPPPSLQYSLPGALPISGQPLTKCIHLTPQQAQEVGITLTPQQAQAQGITLTLQQAQELGIPLTPQQAQALEILFTPQQAQALGIPLTPQQTQVQGITLTPQQDQAPGISLTTQQAQKLGIPLTPQQAQALGIPLTPQQAQELGIPLTPQQAQALRVSLTPQQAQELGIPLTPQQAQALGITLTLQQAQQLGIPLTPQQAQALGITLTPKQVQELGIPLTPQQAQALGITLTPKQAQELGIPLNPQQAQTLGIPLTPKQAQALGIPFTPQQAQALGIPLTPQQAQTQEITLTPQQAQALGMPLTTQQAQELGIPLTPQHAQALGMPLTTQQAQELGIPLTPQQAQALGMPLTTQQAQELGIPLTPQQAQELGIPFTPQQAQAQEITLTPQQAQALGMPLTAQQAQELGITLTPQQAQELGIPLTPQQAQALGIPLIPPQAQELGIPLTPQQAQALGILLIPPQAQELGIPLTPQQAQALGIPLIPPQAQELGIPLTPQQVQALGIPLIPPQAQELEIPLTPQQAQALGIPLTPQQAQELGIPLTPQQAQELGIPLTPQQAQAQGIPLTPQQAQALGISLTPQQAQAQGITLTPQQAQALGVPITPVNAWVSAVTLTSEQTHALESPMNLEQAQEQLLKLGVPLTLDKAHTLGSPLTLKQVQWSHRPFQKSKASLPTGQSIISRLSPSLRLSLASSAPTAEKSSIFGVSSTPLQISRVPLNQGPFAPGKPLEMGILSEPGKLGAPQTLRSSGQTLVYGGQSTSAQFPAPQAPPSPGQLPISRAPPTPGQPFIAGVPPTSGQIPSLWAPLSPGQPLVPEASSIPGDLLESGPLTFSEQLQEFQPPATAEQSPYLQAPSTPGQHLATWTLPGRASSLWIPPTSRHPPTLWPSPAPGKPQKSWSPSVAKKRLAIISSLKSKSVLIHPSAPDFKVAQVPFTTKKFQMSEVSDTSEETQILRDTFAIESFRTFQSHFTKYRTPVYQTPYTDERALLTLMKPTTSPSSLTTLLRTSQISPLEWYQKSRFPPIDKPWILSSVSDTKKPKVMVPPSSPQELEEKRYFVDVEAQKKNLILLNQAIKTCGLPSQLHTMARTLIIEILHMDTVQLGYLFRKYIAYRLIQHARNNIMKRLKAIQNTGKGYEARNLHMMLSRLDDYGKKVMQVWTEKQKSLGQKRNQCLKKMIHVFNQLKKIHELNLSQPIPLIIEEKQIPASTTFVQKPFLKLLMEEDRTSDICKKFRQQEDQTEAIWNVDLSTSSYPIAEKTSMHSLWAQLGGYPDIPRLLQLEVQSTFRKSLASLQSRVKKIPK.

The stretch at 296–340 (EAEKELSLKIIRDLSNENEMLQQKLQDAEEKCEQLIRSKIVIEQL) forms a coiled coil. Disordered stretches follow at residues 412–460 (ERTP…SWKR), 470–489 (ETSGPNLSDNKSGQKVSEAK), 505–538 (EMKSFSEDKSKSPTEAKRKHLSLTETKSQGGKSG), 593–667 (QFDD…SEQS), 809–838 (STVQKDHKEKEKQRQEQYLQEGQEQMSGMS), 868–976 (LQMK…RGLE), 1805–1837 (GGQSTSAQFPAPQAPPSPGQLPISRAPPTPGQP), and 1888–1907 (FQPPATAEQSPYLQAPSTPG). The segment covering 433 to 446 (DSTKDNVSLKKGDF) has biased composition (basic and acidic residues). Over residues 472–484 (SGPNLSDNKSGQK) the composition is skewed to polar residues. Over residues 506 to 520 (MKSFSEDKSKSPTEA) the composition is skewed to basic and acidic residues. Polar residues predominate over residues 527 to 538 (LTETKSQGGKSG). Residues 603–612 (GKIKGKKHHI) are compositionally biased toward basic residues. 2 stretches are compositionally biased toward basic and acidic residues: residues 619–632 (SKEEKTEEKEELTK) and 812–823 (QKDHKEKEKQRQ). A coiled-coil region spans residues 812-860 (QKDHKEKEKQRQEQYLQEGQEQMSGMSLKQQLLGERNLLKEHYEKISEN). A compositionally biased stretch (polar residues) spans 824-838 (EQYLQEGQEQMSGMS). 3 stretches are compositionally biased toward basic and acidic residues: residues 901–912 (AEQEEKQKQRGQ), 939–955 (LEKENGQMRQIQKEAKH), and 964–976 (KGKEKQKPERGLE). Positions 1816–1835 (PQAPPSPGQLPISRAPPTPG) are enriched in pro residues. The segment covering 1894–1907 (AEQSPYLQAPSTPG) has biased composition (polar residues).

This sequence belongs to the FAM186 family.

The sequence is that of Protein FAM186A (FAM186A) from Homo sapiens (Human).